Reading from the N-terminus, the 394-residue chain is Argininosuccinate synthase (394 aa).

ATP-binding positions include 7 to 15 (AYSGGLDTS) and alanine 34. Positions 85 and 90 each coordinate L-citrulline. Position 115 (glycine 115) interacts with ATP. The L-aspartate site is built by threonine 117, asparagine 121, and aspartate 122. Position 121 (asparagine 121) interacts with L-citrulline. Arginine 125, serine 176, serine 185, glutamate 261, and tyrosine 273 together coordinate L-citrulline.

This sequence belongs to the argininosuccinate synthase family. Type 1 subfamily. Homotetramer.

It is found in the cytoplasm. The enzyme catalyses L-citrulline + L-aspartate + ATP = 2-(N(omega)-L-arginino)succinate + AMP + diphosphate + H(+). It participates in amino-acid biosynthesis; L-arginine biosynthesis; L-arginine from L-ornithine and carbamoyl phosphate: step 2/3. This chain is Argininosuccinate synthase, found in Ehrlichia ruminantium (strain Welgevonden).